The following is a 115-amino-acid chain: Ig heavy chain V-III region J606 (115 aa).

The Ig-like domain maps to Glu1–Ser114. Cysteines 22 and 98 form a disulfide.

The sequence is that of Ig heavy chain V-III region J606 from Mus musculus (Mouse).